Here is a 248-residue protein sequence, read N- to C-terminus: Zinc finger CCCH domain-containing protein 36 (248 aa).

2 disordered regions span residues 1–37 (MDTRKRGRPEAGSFNSNGGGYKKSKQEMESYSTGLGS) and 87–110 (MQGSGNGGRFSGRGESGPGHVSNF). The segment at 36–64 (GSKSKPCTKFFSTSGCPFGENCHFLHYVP) adopts a C3H1-type 1 zinc-finger fold. Residues 90 to 103 (SGNGGRFSGRGESG) are compositionally biased toward gly residues. The region spanning 113 to 177 (SATARFSVDA…EQISEASAMV (65 aa)) is the KH domain. A disordered region spans residues 188 to 209 (AKKPPGGGLGGGGGMGSEGKPH). A compositionally biased stretch (gly residues) spans 192 to 204 (PGGGLGGGGGMGS). Residues 213–240 (NFKTKICERFSKGNCTFGDRCHFAHGEA) form a C3H1-type 2 zinc finger.

This is Zinc finger CCCH domain-containing protein 36 from Arabidopsis thaliana (Mouse-ear cress).